A 266-amino-acid chain; its full sequence is 3-methyl-2-oxobutanoate hydroxymethyltransferase (266 aa).

Mg(2+)-binding residues include Asp45 and Asp84. 3-methyl-2-oxobutanoate contacts are provided by residues 45-46 (DS), Asp84, and Lys112. Glu114 contacts Mg(2+). Catalysis depends on Glu181, which acts as the Proton acceptor.

The protein belongs to the PanB family. As to quaternary structure, homodecamer; pentamer of dimers. Mg(2+) is required as a cofactor.

It localises to the cytoplasm. It carries out the reaction 3-methyl-2-oxobutanoate + (6R)-5,10-methylene-5,6,7,8-tetrahydrofolate + H2O = 2-dehydropantoate + (6S)-5,6,7,8-tetrahydrofolate. The protein operates within cofactor biosynthesis; (R)-pantothenate biosynthesis; (R)-pantoate from 3-methyl-2-oxobutanoate: step 1/2. Functionally, catalyzes the reversible reaction in which hydroxymethyl group from 5,10-methylenetetrahydrofolate is transferred onto alpha-ketoisovalerate to form ketopantoate. This chain is 3-methyl-2-oxobutanoate hydroxymethyltransferase, found in Pseudomonas syringae pv. syringae (strain B728a).